A 161-amino-acid chain; its full sequence is Dermonecrotic toxin LarSicTox-alphaI-1 (161 aa).

This sequence belongs to the arthropod phospholipase D family. Class II subfamily. It depends on Mg(2+) as a cofactor. In terms of processing, contains 2 disulfide bonds. Expressed by the venom gland.

The protein localises to the secreted. The catalysed reaction is an N-(acyl)-sphingosylphosphocholine = an N-(acyl)-sphingosyl-1,3-cyclic phosphate + choline. It carries out the reaction an N-(acyl)-sphingosylphosphoethanolamine = an N-(acyl)-sphingosyl-1,3-cyclic phosphate + ethanolamine. The enzyme catalyses a 1-acyl-sn-glycero-3-phosphocholine = a 1-acyl-sn-glycero-2,3-cyclic phosphate + choline. It catalyses the reaction a 1-acyl-sn-glycero-3-phosphoethanolamine = a 1-acyl-sn-glycero-2,3-cyclic phosphate + ethanolamine. Its function is as follows. Dermonecrotic toxins cleave the phosphodiester linkage between the phosphate and headgroup of certain phospholipids (sphingolipid and lysolipid substrates), forming an alcohol (often choline) and a cyclic phosphate. This toxin acts on sphingomyelin (SM). It may also act on ceramide phosphoethanolamine (CPE), lysophosphatidylcholine (LPC) and lysophosphatidylethanolamine (LPE), but not on lysophosphatidylserine (LPS), and lysophosphatidylglycerol (LPG). It acts by transphosphatidylation, releasing exclusively cyclic phosphate products as second products. Induces dermonecrosis, hemolysis, increased vascular permeability, edema, inflammatory response, and platelet aggregation. This is Dermonecrotic toxin LarSicTox-alphaI-1 from Loxosceles arizonica (Arizona brown spider).